The sequence spans 840 residues: Sorting nexin-25 (840 aa).

Residues Met-1 to Glu-164 enclose the PXA domain. In terms of domain architecture, RGS spans Gln-287–Leu-401. Positions Thr-434–Arg-499 form a coiled coil. One can recognise a PX domain in the interval Gly-508–Leu-628. Ser-665 carries the post-translational modification Phosphoserine.

This sequence belongs to the sorting nexin family.

Its subcellular location is the endosome membrane. May be involved in several stages of intracellular trafficking. In Homo sapiens (Human), this protein is Sorting nexin-25 (SNX25).